Consider the following 413-residue polypeptide: MSFVRNISDYFNKIDNLCYNQSWESGDKIAKYLSLNDDHSKEAYLHISEYGSTSRRCRVSEDEIIDEIVCLHLHVLHSVHVAKDLISSQSTQIRIIQLFNKEILQKRKDENWFLPIFYRLCTDLRWLSKGAESCASGDDEGDSNANSFFESAAKAITECYRTCVSDVHAEEGKTKKVAMLNMTNQLFQIYFQINKLNLLKPLIRAIDNCGPLYNKFLMADKVAYNYFLGRKALFDGDLILAEKGLVYAFRNCPTESVSNKRKILVYLIPVKMFLGHMPTASLLHRYRLDEFQEVVAAVKDGHLGRVDNALLTNGEFFIKCGIYLVLEKLRTITYRNLFKKVSQMVGKVQIPLDAFQAALRFVGVTDVDMDELECIIANLIAEKKVKGYLAHQHQKLVISKTNAFPTLSSVSSN.

The PCI domain maps to 222-403 (VAYNYFLGRK…QKLVISKTNA (182 aa)).

Belongs to the CSN12 family.

In Caenorhabditis briggsae, this protein is PCI domain-containing protein 2 homolog.